The chain runs to 256 residues: Small ribosomal subunit protein eS1 (256 aa).

The segment covering 1–18 has biased composition (basic residues); the sequence is MAVGKNKRLSKGKKGLKK. Residues 1 to 20 form a disordered region; that stretch reads MAVGKNKRLSKGKKGLKKRT. The residue at position 2 (A2) is an N-acetylalanine; partial.

Belongs to the eukaryotic ribosomal protein eS1 family. In terms of assembly, component of the small ribosomal subunit. Mature ribosomes consist of a small (40S) and a large (60S) subunit. The 40S subunit contains about 33 different proteins and 1 molecule of RNA (18S). The 60S subunit contains about 49 different proteins and 3 molecules of RNA (25S, 5.8S and 5S).

It localises to the cytoplasm. The sequence is that of Small ribosomal subunit protein eS1 (rps1) from Talaromyces marneffei (strain ATCC 18224 / CBS 334.59 / QM 7333) (Penicillium marneffei).